A 208-amino-acid chain; its full sequence is Histone H1t (208 aa).

The span at 1–12 (MSETAPAASSTL) shows a compositional bias: polar residues. The disordered stretch occupies residues 1-39 (MSETAPAASSTLVPAPVEKPSSKRRGKKPGLAPARKPRG). S9 carries the post-translational modification Phosphoserine. An H15 domain is found at 38-111 (RGFSVSKLIP…GASGSFKLSK (74 aa)). R56 is modified (citrulline). A disordered region spans residues 95–208 (LVQTKGTGAS…TDLRKAAGRK (114 aa)). Over residues 121-134 (KGKKSASAKAKKMG) the composition is skewed to basic residues. Phosphoserine is present on S141. Residues 143–154 (KSSKTKAVKKPK) show a composition bias toward basic residues. Residue T156 is modified to Phosphothreonine. S163 and S178 each carry phosphoserine. A compositionally biased stretch (basic and acidic residues) spans 199–208 (TDLRKAAGRK).

The protein belongs to the histone H1/H5 family. Post-translationally, phosphorylated in early spermatids. Citrullination at Arg-56 (H1R54ci) by PADI4 takes place within the DNA-binding site of H1 and results in its displacement from chromatin and global chromatin decondensation, thereby promoting pluripotency and stem cell maintenance. As to expression, testis-specific.

It is found in the nucleus. The protein resides in the chromosome. Its function is as follows. Testis-specific histone H1 that forms less compacted chromatin compared to other H1 histone subtypes. Formation of more relaxed chromatin may be required to promote chromatin architecture required for proper chromosome regulation during meiosis, such as homologous recombination. Histones H1 act as linkers that bind to nucleosomes and compact polynucleosomes into a higher-order chromatin configuration. This Mus musculus (Mouse) protein is Histone H1t.